Reading from the N-terminus, the 133-residue chain is Aspartate 1-decarboxylase (133 aa).

The Schiff-base intermediate with substrate; via pyruvic acid role is filled by S26. A Pyruvic acid (Ser) modification is found at S26. T58 lines the substrate pocket. Catalysis depends on Y59, which acts as the Proton donor. G74–A76 serves as a coordination point for substrate.

It belongs to the PanD family. In terms of assembly, heterooctamer of four alpha and four beta subunits. Pyruvate serves as cofactor. Post-translationally, is synthesized initially as an inactive proenzyme, which is activated by self-cleavage at a specific serine bond to produce a beta-subunit with a hydroxyl group at its C-terminus and an alpha-subunit with a pyruvoyl group at its N-terminus.

It is found in the cytoplasm. It carries out the reaction L-aspartate + H(+) = beta-alanine + CO2. It functions in the pathway cofactor biosynthesis; (R)-pantothenate biosynthesis; beta-alanine from L-aspartate: step 1/1. In terms of biological role, catalyzes the pyruvoyl-dependent decarboxylation of aspartate to produce beta-alanine. This is Aspartate 1-decarboxylase from Legionella pneumophila subsp. pneumophila (strain Philadelphia 1 / ATCC 33152 / DSM 7513).